We begin with the raw amino-acid sequence, 349 residues long: MTNEHSAPLTYRDAGVDIDAGDALVDRIKPLAARTMRPGVLAGIGGFGALFEVPKKYREPVLVSGTDGVGTKLRLAFDWNRHDTVGIDLVAMSVNDILVQGAEPLFFLDYFACGKLSVDTAAAVVGGIARGCELAGCALIGGETAEMPGMYPDGEYDLAGFAVGAVEKTAIIDGKSIQPGDVVLGLASSGAHSNGYSLVRKILERAGARPDQDFHGQPLVDVVMAPTRIYVKQVLAALAEHGTAIKGLAHITGGGLLDNVPRILQQGLSAKLYRDGWQMPQLFQWLQQQGAVADTEMYRVFNCGIGMVLVVAADQADAISATLRAQGEAVSRLGEIVPQQDGMAQTFVV.

It belongs to the AIR synthase family.

Its subcellular location is the cytoplasm. It carries out the reaction 2-formamido-N(1)-(5-O-phospho-beta-D-ribosyl)acetamidine + ATP = 5-amino-1-(5-phospho-beta-D-ribosyl)imidazole + ADP + phosphate + H(+). It participates in purine metabolism; IMP biosynthesis via de novo pathway; 5-amino-1-(5-phospho-D-ribosyl)imidazole from N(2)-formyl-N(1)-(5-phospho-D-ribosyl)glycinamide: step 2/2. The protein is Phosphoribosylformylglycinamidine cyclo-ligase of Bordetella avium (strain 197N).